The primary structure comprises 23 residues: Protein NS0 (23 aa).

May play a role inhost modulation. Is not involved in viral protein synthesis or DNA replication. This Porcine circovirus 2 (PCV2) protein is Protein NS0 (NS0).